Here is a 647-residue protein sequence, read N- to C-terminus: 5-aminolevulinate synthase, non-specific, mitochondrial (647 aa).

The N-terminal 56 residues, 1–56 (METVVRRCPFLSRVPQAFLQKAGKSLLFYAQNCPKMMEIGAKPAPRALSTSAVLCQ), are a transit peptide targeting the mitochondrion. The disordered stretch occupies residues 61 to 112 (TPPANEKDKAAKAEVQQAPDGSQQAPDGSQQTADGTQLPSGHPSLASSQGTG). The span at 79–112 (PDGSQQAPDGSQQTADGTQLPSGHPSLASSQGTG) shows a compositional bias: polar residues. Substrate-binding residues include R224, S341, and K360. S393, H421, and T449 together coordinate pyridoxal 5'-phosphate. K452 is an active-site residue. Residue K452 is modified to N6-(pyridoxal phosphate)lysine. Pyridoxal 5'-phosphate is bound by residues T481 and T482. T569 contributes to the substrate binding site. At P583 the chain carries Hydroxyproline.

It belongs to the class-II pyridoxal-phosphate-dependent aminotransferase family. In terms of assembly, homodimer. Interacts (hydroxylated form) with VHL. Requires pyridoxal 5'-phosphate as cofactor. In terms of processing, in normoxia, is hydroxylated at Pro-583, promoting interaction with VHL, initiating ubiquitination and subsequent degradation via the proteasome. Post-translationally, ubiquitinated; in normoxia following hydroxylation and interaction with VHL, leading to its subsequent degradation via the proteasome.

It localises to the mitochondrion inner membrane. The enzyme catalyses succinyl-CoA + glycine + H(+) = 5-aminolevulinate + CO2 + CoA. It functions in the pathway porphyrin-containing compound metabolism; protoporphyrin-IX biosynthesis; 5-aminolevulinate from glycine: step 1/1. Catalyzes the pyridoxal 5'-phosphate (PLP)-dependent condensation of succinyl-CoA and glycine to form aminolevulinic acid (ALA), with CoA and CO2 as by-products. This is 5-aminolevulinate synthase, non-specific, mitochondrial (ALAS1) from Bos taurus (Bovine).